The following is a 332-amino-acid chain: Glycerol-3-phosphate dehydrogenase [NAD(P)+] (332 aa).

Serine 11, phenylalanine 12, arginine 32, and lysine 106 together coordinate NADPH. Residues lysine 106, glycine 134, and serine 136 each coordinate sn-glycerol 3-phosphate. Alanine 138 serves as a coordination point for NADPH. Positions 189, 242, 252, 253, and 254 each coordinate sn-glycerol 3-phosphate. Catalysis depends on lysine 189, which acts as the Proton acceptor. Residue arginine 253 coordinates NADPH. Positions 277 and 279 each coordinate NADPH.

The protein belongs to the NAD-dependent glycerol-3-phosphate dehydrogenase family.

It localises to the cytoplasm. It carries out the reaction sn-glycerol 3-phosphate + NAD(+) = dihydroxyacetone phosphate + NADH + H(+). It catalyses the reaction sn-glycerol 3-phosphate + NADP(+) = dihydroxyacetone phosphate + NADPH + H(+). Its pathway is membrane lipid metabolism; glycerophospholipid metabolism. Functionally, catalyzes the reduction of the glycolytic intermediate dihydroxyacetone phosphate (DHAP) to sn-glycerol 3-phosphate (G3P), the key precursor for phospholipid synthesis. This is Glycerol-3-phosphate dehydrogenase [NAD(P)+] from Clostridium acetobutylicum (strain ATCC 824 / DSM 792 / JCM 1419 / IAM 19013 / LMG 5710 / NBRC 13948 / NRRL B-527 / VKM B-1787 / 2291 / W).